Here is a 364-residue protein sequence, read N- to C-terminus: Coproporphyrin III ferrochelatase (364 aa).

Residues arginine 29 and tyrosine 118 each contribute to the Fe-coproporphyrin III site. Fe(2+) contacts are provided by histidine 169 and glutamate 250.

The protein belongs to the ferrochelatase family.

The protein localises to the cytoplasm. The catalysed reaction is Fe-coproporphyrin III + 2 H(+) = coproporphyrin III + Fe(2+). It functions in the pathway porphyrin-containing compound metabolism; protoheme biosynthesis. In terms of biological role, involved in coproporphyrin-dependent heme b biosynthesis. Catalyzes the insertion of ferrous iron into coproporphyrin III to form Fe-coproporphyrin III. In Streptococcus pneumoniae serotype 2 (strain D39 / NCTC 7466), this protein is Coproporphyrin III ferrochelatase.